A 307-amino-acid chain; its full sequence is Mitochondrial brown fat uncoupling protein 1 (307 aa).

The Mitochondrial intermembrane portion of the chain corresponds to 1–10 (MVSLTTSEVH). Residues 11–32 (PTMGVKTFSAGISACLADIITF) traverse the membrane as a helical segment. Solcar repeat units follow at residues 11–102 (PTMG…VQEY), 111–201 (PTLG…MKGA), and 210–295 (DDVP…LKKE). Topologically, residues 33-73 (PLDTAKVRLQIQGEGQTSSTIRYKGVLGTITTLAKTEGWPK) are mitochondrial matrix. Residue Lys-56 participates in fatty acid 16:0 binding. A helical membrane pass occupies residues 74 to 96 (LYSGLPAGIQRQISFASLRIGLY). The Mitochondrial intermembrane segment spans residues 97 to 116 (DTVQEYFSSGKETPPTLGNR). Residues 117–133 (ISAGLMTGGVAVFIGQP) form a helical membrane-spanning segment. The Mitochondrial matrix segment spans residues 134-178 (TEVVKVRLQAQSHLHGIKPRYTGTYNAYRIIATTESFSTLWKGTT). A helical transmembrane segment spans residues 179 to 195 (PNLMRNVIINRTELVTY). Over 196-212 (DLMKGALVNNQILADDV) the chain is Mitochondrial intermembrane. Residues 213–232 (PCHLLSALVAGFCTTFLASP) traverse the membrane as a helical segment. Topologically, residues 233-266 (ADVVKTRFINSLPGQYPSVPSCAMTMLTKEGPTA) are mitochondrial matrix. At Cys-254 the chain carries Cysteine sulfenic acid (-SOH). A helical transmembrane segment spans residues 267 to 289 (FFKGFVPSFLRLASWNVIMFVCF). Lys-269 lines the fatty acid 16:0 pocket. Residues 290 to 307 (EQLKKELMKSRQTMDCTT) are Mitochondrial intermembrane-facing.

This sequence belongs to the mitochondrial carrier (TC 2.A.29) family. Most probably functions as a monomer. Binds one purine nucleotide per monomer. However, has also been suggested to function as a homodimer or a homotetramer. Tightly associates with cardiolipin in the mitochondrion inner membrane; may stabilize and regulate its activity. Post-translationally, may undergo sulfenylation upon cold exposure. May increase the sensitivity of UCP1 thermogenic function to the activation by noradrenaline probably through structural effects. May undergo ubiquitin-mediated proteasomal degradation.

It is found in the mitochondrion inner membrane. It catalyses the reaction H(+)(in) = H(+)(out). Has no constitutive proton transporter activity and has to be activated by long-chain fatty acids/LCFAs. Inhibited by purine nucleotides. Both purine nucleotides and LCFAs bind the cytosolic side of the transporter and directly compete to activate or inhibit it. Activated by noradrenaline and reactive oxygen species. Despite lacking canonical translational encoding for selenocysteine, a small pool of the protein has been observed to selectively incorporate selenocysteine at 'Cys-254'. Selenocysteine-modified protein is highly sensitive to redox modification and may constitute a pool of protein highly sensitive to activation by elevated levels of reactive oxygen species (ROS). Its function is as follows. Mitochondrial protein responsible for thermogenic respiration, a specialized capacity of brown adipose tissue and beige fat that participates in non-shivering adaptive thermogenesis to temperature and diet variations and more generally to the regulation of energy balance. Functions as a long-chain fatty acid/LCFA and proton symporter, simultaneously transporting one LCFA and one proton through the inner mitochondrial membrane. However, LCFAs remaining associated with the transporter via their hydrophobic tails, it results in an apparent transport of protons activated by LCFAs. Thereby, dissipates the mitochondrial proton gradient and converts the energy of substrate oxydation into heat instead of ATP. Regulates the production of reactive oxygen species/ROS by mitochondria. This chain is Mitochondrial brown fat uncoupling protein 1, found in Dicrostonyx groenlandicus (Northern collared lemming).